A 366-amino-acid chain; its full sequence is Probable quinol oxidase subunit 2 (366 aa).

Residues 1-19 (MSKFKSLLLLFGTLILLSG) form the signal peptide. Cysteine 20 carries N-palmitoyl cysteine lipidation. Cysteine 20 carries the S-diacylglycerol cysteine lipid modification. Transmembrane regions (helical) follow at residues 38-58 (FLIL…LGMF) and 80-100 (AIIE…LAIP). Residues 330-366 (EPYNNEFKKDESKNAKEMKKISKDAQDQDNDDHGGGH) are disordered. The span at 335–366 (EFKKDESKNAKEMKKISKDAQDQDNDDHGGGH) shows a compositional bias: basic and acidic residues.

This sequence belongs to the cytochrome c oxidase subunit 2 family.

It is found in the cell membrane. It carries out the reaction 2 a quinol + O2 = 2 a quinone + 2 H2O. Functionally, catalyzes quinol oxidation with the concomitant reduction of oxygen to water. Subunit II transfers the electrons from a quinol to the binuclear center of the catalytic subunit I. This is Probable quinol oxidase subunit 2 (qoxA) from Staphylococcus aureus (strain bovine RF122 / ET3-1).